The chain runs to 607 residues: Protease Do-like 2, chloroplastic (607 aa).

The disordered stretch occupies residues 41–104 (SSNIKRKSSR…LSDFSRDQQT (64 aa)). Basic and acidic residues predominate over residues 87 to 104 (PKKEKKESLSDFSRDQQT). A serine protease region spans residues 118–317 (VVKVYCTHTA…LTDYERNGKY (200 aa)). Residues histidine 159, aspartate 190, and serine 268 each act as charge relay system in the active site. One can recognise a PDZ domain in the interval 308-403 (LTDYERNGKY…YLISQKFAGD (96 aa)).

This sequence belongs to the peptidase S1C family.

The protein resides in the plastid. It is found in the chloroplast thylakoid membrane. In terms of biological role, serine protease that performs the primary cleavage of the photodamaged D1 protein in plant photosystem II. The protein is Protease Do-like 2, chloroplastic (DEGP2) of Arabidopsis thaliana (Mouse-ear cress).